The sequence spans 349 residues: MSFLCSENSYQQQSKISIDIDKSLKNHKLKLEEEIRVLIYGQKKVGVTTLFKTFLLMGESQITPEELMDNRNNVYKTIINQLKKFIIISNNSKIELENNNNIQMSNLILELDSENFLWNKEIGETCLKLWNDSGIQKIFQSQFSEFFGYFFKHLQRISDENYTPTPQDLNFIKLTQNGIIEGKFTFERCLIKMIEMGIQTSTLKKWINCFSEVQAIIYVIDLSVYDIVESEDCSKSINKLEKSLNGFKEIIESKYLHGCGVIVFFNKKDIFREKLKTVPFKTYDKDYIGENDFESTTNFIKNKLLDYYSNPNKNVYFLINEESEVDICRSTFNILKDIVLNITYNSVKN.

Residues 33–349 (EEIRVLIYGQ…LNITYNSVKN (317 aa)) form the G-alpha domain. The interval 36 to 49 (RVLIYGQKKVGVTT) is G1 motif. The interval 168–176 (DLNFIKLTQ) is G2 motif. Residues 191–200 (IKMIEMGIQT) form a G3 motif region. GTP contacts are provided by residues 195 to 199 (EMGIQ) and 266 to 269 (NKKD). The tract at residues 262–269 (IVFFNKKD) is G4 motif. The segment at 320 to 325 (NEESEV) is G5 motif.

This sequence belongs to the G-alpha family.

This chain is Guanine nucleotide-binding protein-like alpha-10 subunit (gpaJ), found in Dictyostelium discoideum (Social amoeba).